The sequence spans 734 residues: MASRFPKFSQGLAQDPTTRRIWFGIATAHDFESHDDMTEEKLYQKIFASHFGQLAIIFLWTSGNLFHVAWQGNFEAWSQDPLHIRPIAHAIWDPHFGQPAVEAYTRGGASGPVNISYSGVYQWWYTIGLRTNQDLYTGSLFLLGLAAVALVAGWLHLQPKWKPSVSWFKNAESRLNHHLSGLFGVSSLAWTGHLIHVAIPEARGQHVRWDNFLSVAPHPQGLAPFFAGQWGVYAQDPDSSSHLFGTAQGSGTAILTFLGGFHPQTQSLWLTDIAHHHLAIAVLFIVAGHMYRTNFGIGHSMKEILEAHVPPGGGLGRGHQGLYDTVNNSLHFQLGLALACLGVITSLVAQHIYSLPPYAFLAQDFTTQAALYTHHQYIAGFIMTGAFAHGAIFFIRDYNPEQNKGNVLARMLEHKEAIISHLSWASLFLGFHTLGLYVHNDVMLAFGTPEKQILIEPVFAQWIQSSHGKTLYGFDVLLSSSSSIALNAGKSLWLPGWLDAINNNSNSLFLTIGPGDFLVHHAIALGLHTTTLILVKGALDARGSKLMPDKKEFGFSFPCDGPGRGGTCDISAYDAFYLAVFWMLNTIGWVTFYWHWKHLGLWQGNVAQFNESSTYLMGWLRDYLWLNSSQLINGYNPFGMNSLSVWAWMFLFGHLVWATGFMFLISWRGYWQELIETLAWAHERTPLANLVRWKDKPVALSIVQARLVGLAHFSVGYIFTYAAFLIASTSGKFG.

Transmembrane regions (helical) follow at residues 46 to 69 (IFASHFGQLAIIFLWTSGNLFHVA), 135 to 158 (LYTGSLFLLGLAAVALVAGWLHLQ), 175 to 199 (LNHHLSGLFGVSSLAWTGHLIHVAI), 273 to 291 (IAHHHLAIAVLFIVAGHMY), 330 to 353 (LHFQLGLALACLGVITSLVAQHIY), 369 to 395 (AALYTHHQYIAGFIMTGAFAHGAIFFI), 417 to 439 (AIISHLSWASLFLGFHTLGLYVH), and 517 to 535 (FLVHHAIALGLHTTTLILV). Cysteine 559 and cysteine 568 together coordinate [4Fe-4S] cluster. 2 consecutive transmembrane segments (helical) span residues 575–596 (AFYLAVFWMLNTIGWVTFYWHW) and 643–665 (LSVWAWMFLFGHLVWATGFMFLI). Chlorophyll a is bound by residues histidine 654, methionine 662, and tyrosine 670. Residue tryptophan 671 participates in phylloquinone binding. A helical membrane pass occupies residues 707 to 727 (LVGLAHFSVGYIFTYAAFLIA).

The protein belongs to the PsaA/PsaB family. The PsaA/B heterodimer binds the P700 chlorophyll special pair and subsequent electron acceptors. PSI consists of a core antenna complex that captures photons, and an electron transfer chain that converts photonic excitation into a charge separation. The eukaryotic PSI reaction center is composed of at least 11 subunits. Requires P700 is a chlorophyll a/chlorophyll a' dimer, A0 is one or more chlorophyll a, A1 is one or both phylloquinones and FX is a shared 4Fe-4S iron-sulfur center. as cofactor.

Its subcellular location is the plastid. The protein resides in the chloroplast thylakoid membrane. It catalyses the reaction reduced [plastocyanin] + hnu + oxidized [2Fe-2S]-[ferredoxin] = oxidized [plastocyanin] + reduced [2Fe-2S]-[ferredoxin]. PsaA and PsaB bind P700, the primary electron donor of photosystem I (PSI), as well as the electron acceptors A0, A1 and FX. PSI is a plastocyanin-ferredoxin oxidoreductase, converting photonic excitation into a charge separation, which transfers an electron from the donor P700 chlorophyll pair to the spectroscopically characterized acceptors A0, A1, FX, FA and FB in turn. Oxidized P700 is reduced on the lumenal side of the thylakoid membrane by plastocyanin. The sequence is that of Photosystem I P700 chlorophyll a apoprotein A2 from Staurastrum punctulatum (Green alga).